Here is a 179-residue protein sequence, read N- to C-terminus: Large ribosomal subunit protein uL6 (179 aa).

The protein belongs to the universal ribosomal protein uL6 family. In terms of assembly, part of the 50S ribosomal subunit.

This protein binds to the 23S rRNA, and is important in its secondary structure. It is located near the subunit interface in the base of the L7/L12 stalk, and near the tRNA binding site of the peptidyltransferase center. The polypeptide is Large ribosomal subunit protein uL6 (Leptospira interrogans serogroup Icterohaemorrhagiae serovar copenhageni (strain Fiocruz L1-130)).